We begin with the raw amino-acid sequence, 182 residues long: Adenine phosphoribosyltransferase (182 aa).

This sequence belongs to the purine/pyrimidine phosphoribosyltransferase family. As to quaternary structure, homodimer.

Its subcellular location is the cytoplasm. It catalyses the reaction AMP + diphosphate = 5-phospho-alpha-D-ribose 1-diphosphate + adenine. It participates in purine metabolism; AMP biosynthesis via salvage pathway; AMP from adenine: step 1/1. In terms of biological role, catalyzes a salvage reaction resulting in the formation of AMP, that is energically less costly than de novo synthesis. This is Adenine phosphoribosyltransferase from Koribacter versatilis (strain Ellin345).